Reading from the N-terminus, the 716-residue chain is DNA replication licensing factor MCM7 (716 aa).

The C4-type zinc finger occupies 178–205; that stretch reads CEDCGHEIYQEVTSRVFMPLFKCPSSRC. The region spanning 326–531 is the MCM domain; the sequence is IYNKLSRSLA…MDSDLELAKH (206 aa). 376–383 is a binding site for ATP; it reads GDPGVAKS. An Arginine finger motif is present at residues 508–511; the sequence is SRFD.

The protein belongs to the MCM family. As to quaternary structure, component of the minichromosome maintenance (MCM) complex, a heterotetramer composed of MCM2, MCM3, MCM4, MCM5, MCM6 and MCM7. Interacts with ETG1. Expressed in shoot apex and flower buds.

Its subcellular location is the nucleus. It localises to the cytoplasm. The catalysed reaction is ATP + H2O = ADP + phosphate + H(+). Probable component of the MCM2-7 complex (MCM complex) that may function as a DNA helicase and which is essential to undergo a single round of replication initiation and elongation per cell cycle in eukaryotic cells. Required for megagametophyte and embryo development. The protein is DNA replication licensing factor MCM7 (MCM7) of Arabidopsis thaliana (Mouse-ear cress).